A 343-amino-acid polypeptide reads, in one-letter code: Anthranilate phosphoribosyltransferase (343 aa).

5-phospho-alpha-D-ribose 1-diphosphate contacts are provided by residues G84, 87–88 (GD), T92, 94–97 (NIST), 112–120 (KHGNRSVSS), and S124. G84 contacts anthranilate. S96 contacts Mg(2+). N115 contacts anthranilate. R170 is a binding site for anthranilate. Residues D229 and E230 each coordinate Mg(2+).

The protein belongs to the anthranilate phosphoribosyltransferase family. Homodimer. Requires Mg(2+) as cofactor.

It carries out the reaction N-(5-phospho-beta-D-ribosyl)anthranilate + diphosphate = 5-phospho-alpha-D-ribose 1-diphosphate + anthranilate. The protein operates within amino-acid biosynthesis; L-tryptophan biosynthesis; L-tryptophan from chorismate: step 2/5. Functionally, catalyzes the transfer of the phosphoribosyl group of 5-phosphorylribose-1-pyrophosphate (PRPP) to anthranilate to yield N-(5'-phosphoribosyl)-anthranilate (PRA). This Stenotrophomonas maltophilia (strain K279a) protein is Anthranilate phosphoribosyltransferase.